The sequence spans 283 residues: Polyamine aminopropyltransferase (283 aa).

One can recognise a PABS domain in the interval Asn5 to Lys241. Gln35 is an S-methyl-5'-thioadenosine binding site. His66 and Asp90 together coordinate spermidine. Residues Asp110 and Asp141–Gly142 each bind S-methyl-5'-thioadenosine. Asp160 acts as the Proton acceptor in catalysis. Residue Asp160–Asp163 coordinates spermidine. Pro167 provides a ligand contact to S-methyl-5'-thioadenosine.

Belongs to the spermidine/spermine synthase family. Homodimer or homotetramer.

The protein localises to the cytoplasm. The catalysed reaction is S-adenosyl 3-(methylsulfanyl)propylamine + putrescine = S-methyl-5'-thioadenosine + spermidine + H(+). Its pathway is amine and polyamine biosynthesis; spermidine biosynthesis; spermidine from putrescine: step 1/1. Its function is as follows. Catalyzes the irreversible transfer of a propylamine group from the amino donor S-adenosylmethioninamine (decarboxy-AdoMet) to putrescine (1,4-diaminobutane) to yield spermidine. The chain is Polyamine aminopropyltransferase from Stenotrophomonas maltophilia (strain R551-3).